The chain runs to 301 residues: NAD kinase 2 (301 aa).

Asp77 serves as the catalytic Proton acceptor. NAD(+)-binding positions include 77-78, Arg82, 151-152, Arg162, Asp181, and 192-197; these read DG, NE, and TAYAFS.

It belongs to the NAD kinase family. Requires a divalent metal cation as cofactor.

The protein localises to the cytoplasm. The enzyme catalyses NAD(+) + ATP = ADP + NADP(+) + H(+). In terms of biological role, involved in the regulation of the intracellular balance of NAD and NADP, and is a key enzyme in the biosynthesis of NADP. Catalyzes specifically the phosphorylation on 2'-hydroxyl of the adenosine moiety of NAD to yield NADP. This is NAD kinase 2 from Streptomyces avermitilis (strain ATCC 31267 / DSM 46492 / JCM 5070 / NBRC 14893 / NCIMB 12804 / NRRL 8165 / MA-4680).